The chain runs to 209 residues: MQTNRLIGINGGTFDPIHFGHLRPALEVLHALHLDEMRFIPAYQPVHRASPSVSAQQRCEMVQLAIQNQPSFKLDTIELDLGGPSYTVNTLEALKKAEPDASFVLMMGTDAFAKFNQWHDWQGVLNLANIVVTHRPGEPVPRDGEVGQIFMNHWVPNLTEASGQIVDLPVTQLDLSATALRSYLKNGDPVDYLMPENVARYIYEHQLYQ.

This sequence belongs to the NadD family.

The enzyme catalyses nicotinate beta-D-ribonucleotide + ATP + H(+) = deamido-NAD(+) + diphosphate. The protein operates within cofactor biosynthesis; NAD(+) biosynthesis; deamido-NAD(+) from nicotinate D-ribonucleotide: step 1/1. Functionally, catalyzes the reversible adenylation of nicotinate mononucleotide (NaMN) to nicotinic acid adenine dinucleotide (NaAD). In Hydrogenovibrio crunogenus (strain DSM 25203 / XCL-2) (Thiomicrospira crunogena), this protein is Probable nicotinate-nucleotide adenylyltransferase.